The following is a 132-amino-acid chain: Large ribosomal subunit protein bL20c (132 aa).

The protein belongs to the bacterial ribosomal protein bL20 family.

The protein localises to the plastid. It is found in the chloroplast. In terms of biological role, binds directly to 23S ribosomal RNA and is necessary for the in vitro assembly process of the 50S ribosomal subunit. It is not involved in the protein synthesizing functions of that subunit. This is Large ribosomal subunit protein bL20c from Coffea arabica (Arabian coffee).